The following is a 572-amino-acid chain: Urease subunit alpha (572 aa).

The Urease domain maps to 134–572; sequence GGIDSHIHFI…LPMTQRYFLF (439 aa). Ni(2+) contacts are provided by H139, H141, and K222. An N6-carboxylysine modification is found at K222. A substrate-binding site is contributed by H224. 2 residues coordinate Ni(2+): H251 and H277. The active-site Proton donor is H325. Residue D365 coordinates Ni(2+).

The protein belongs to the metallo-dependent hydrolases superfamily. Urease alpha subunit family. In terms of assembly, heterotrimer of UreA (gamma), UreB (beta) and UreC (alpha) subunits. Three heterotrimers associate to form the active enzyme. Ni cation is required as a cofactor. In terms of processing, carboxylation allows a single lysine to coordinate two nickel ions.

It is found in the cytoplasm. It catalyses the reaction urea + 2 H2O + H(+) = hydrogencarbonate + 2 NH4(+). Its pathway is nitrogen metabolism; urea degradation; CO(2) and NH(3) from urea (urease route): step 1/1. This Polaromonas sp. (strain JS666 / ATCC BAA-500) protein is Urease subunit alpha.